Here is a 341-residue protein sequence, read N- to C-terminus: Methionine import ATP-binding protein MetN 2 (341 aa).

The 240-residue stretch at 2–241 folds into the ABC transporter domain; the sequence is INLQNVSKIY…PKEEMTKRFV (240 aa). Position 38-45 (38-45) interacts with ATP; the sequence is GYSGAGKS.

The protein belongs to the ABC transporter superfamily. Methionine importer (TC 3.A.1.24) family. The complex is composed of two ATP-binding proteins (MetN), two transmembrane proteins (MetI) and a solute-binding protein (MetQ).

The protein localises to the cell membrane. The enzyme catalyses L-methionine(out) + ATP + H2O = L-methionine(in) + ADP + phosphate + H(+). The catalysed reaction is D-methionine(out) + ATP + H2O = D-methionine(in) + ADP + phosphate + H(+). In terms of biological role, part of the ABC transporter complex MetNIQ involved in methionine import. Responsible for energy coupling to the transport system. The polypeptide is Methionine import ATP-binding protein MetN 2 (Bacillus licheniformis (strain ATCC 14580 / DSM 13 / JCM 2505 / CCUG 7422 / NBRC 12200 / NCIMB 9375 / NCTC 10341 / NRRL NRS-1264 / Gibson 46)).